The sequence spans 220 residues: Protein GrpE (220 aa).

It belongs to the GrpE family. Homodimer.

It is found in the cytoplasm. Its function is as follows. Participates actively in the response to hyperosmotic and heat shock by preventing the aggregation of stress-denatured proteins, in association with DnaK and GrpE. It is the nucleotide exchange factor for DnaK and may function as a thermosensor. Unfolded proteins bind initially to DnaJ; upon interaction with the DnaJ-bound protein, DnaK hydrolyzes its bound ATP, resulting in the formation of a stable complex. GrpE releases ADP from DnaK; ATP binding to DnaK triggers the release of the substrate protein, thus completing the reaction cycle. Several rounds of ATP-dependent interactions between DnaJ, DnaK and GrpE are required for fully efficient folding. In Bartonella quintana (strain Toulouse) (Rochalimaea quintana), this protein is Protein GrpE.